A 166-amino-acid chain; its full sequence is Ribosome maturation factor RimP (166 aa).

The protein belongs to the RimP family.

Its subcellular location is the cytoplasm. Functionally, required for maturation of 30S ribosomal subunits. The chain is Ribosome maturation factor RimP from Rickettsia akari (strain Hartford).